The following is a 487-amino-acid chain: N-succinylglutamate 5-semialdehyde dehydrogenase (487 aa).

221 to 226 (GSSDTG) is a binding site for NAD(+). Residues Glu244 and Cys278 contribute to the active site.

The protein belongs to the aldehyde dehydrogenase family. AstD subfamily.

The enzyme catalyses N-succinyl-L-glutamate 5-semialdehyde + NAD(+) + H2O = N-succinyl-L-glutamate + NADH + 2 H(+). Its pathway is amino-acid degradation; L-arginine degradation via AST pathway; L-glutamate and succinate from L-arginine: step 4/5. Catalyzes the NAD-dependent reduction of succinylglutamate semialdehyde into succinylglutamate. This Burkholderia orbicola (strain MC0-3) protein is N-succinylglutamate 5-semialdehyde dehydrogenase.